Consider the following 342-residue polypeptide: Platelet-activating factor receptor (342 aa).

At 1 to 16 (MEPNNSFRVDSEFRYT) the chain is on the extracellular side. A glycan (N-linked (GlcNAc...) asparagine) is linked at asparagine 4. A helical transmembrane segment spans residues 17–38 (LFPIFYSIVFVLGVIANSYVLW). The Cytoplasmic segment spans residues 39 to 54 (VFARLYPSKKFNEIKI). The chain crosses the membrane as a helical span at residues 55–74 (FMVNLTMADLLFLVTLPLWI). The Extracellular segment spans residues 75–91 (VYYYNQGDWILPKFLCN). Cysteine 90 and cysteine 173 form a disulfide bridge. Residues 92 to 113 (LAGCFFFINTYCSVAFLAVITY) traverse the membrane as a helical segment. Residues 114-133 (NRFQAVTRPIKTAQATTRKR) are Cytoplasmic-facing. Residues 134 to 155 (GILLSLIIWVSIVGAASYFFVL) traverse the membrane as a helical segment. Residues 156–184 (DSTNREPNKTGSANITRCFEHYEKGSIPV) lie on the Extracellular side of the membrane. N-linked (GlcNAc...) asparagine glycans are attached at residues asparagine 163 and asparagine 169. A helical transmembrane segment spans residues 185-205 (LTIHIFLVFSFFLVFLIILFC). At 206–233 (NLVIIRTLLTQQVQIQRNAEVKRRALWM) the chain is on the cytoplasmic side. A helical membrane pass occupies residues 234–254 (VCTVLAVFIICFVPHHLVQLP). Residues 255–276 (WTLAELGFQDTDFHQAINDAHQ) lie on the Extracellular side of the membrane. A helical transmembrane segment spans residues 277–296 (VTLCLLSTNCVLDPIIYCFL). Residues 297-342 (TKKFRKHLTEKLYSMRESRKCSRATSETGTEVVMQLKDVPVKSLKY) lie on the Cytoplasmic side of the membrane.

The protein belongs to the G-protein coupled receptor 1 family. In terms of assembly, interacts with ARRB1. Found in oviductal epithelial and stroma cells. Levels in the oviduct are raised at days 2-4 of both pregnancy and of the estrus cycle. In the endometrium, localization is predominantly to the apical borders of glandular and luminal epithelial cells. Expressed at lower levels in endometrial stromal cells. Levels in the endometrium are increased at day 20 of pregnancy (at protein level).

It localises to the cell membrane. Functionally, receptor for platelet activating factor, a chemotactic phospholipid mediator that possesses potent inflammatory, smooth-muscle contractile and hypotensive activity. Seems to mediate its action via a G protein that activates a phosphatidylinositol-calcium second messenger system. May be involved in the morphological and physical modifications of the oviduct and uterus during the estrus cycle and early pregnancy. This Bos taurus (Bovine) protein is Platelet-activating factor receptor.